Consider the following 199-residue polypeptide: Chaperone protein TorD (199 aa).

The protein belongs to the TorD/DmsD family. TorD subfamily.

Its subcellular location is the cytoplasm. Functionally, involved in the biogenesis of TorA. Acts on TorA before the insertion of the molybdenum cofactor and, as a result, probably favors a conformation of the apoenzyme that is competent for acquiring the cofactor. This chain is Chaperone protein TorD, found in Escherichia coli O7:K1 (strain IAI39 / ExPEC).